A 33-amino-acid chain; its full sequence is MSDINATRLPIWGIGCDPCVGDDVAALTTRGEA.

A propeptide spanning residues 1–10 (MSDINATRLP) is cleaved from the precursor. The segment at residues 11–18 (IWGIGCDP) is a cross-link (cyclopeptide (Ile-Pro)). Positions 12-16 (WGIGC) form a cross-link, 2'-cysteinyl-6'-hydroxytryptophan sulfoxide (Trp-Cys). The propeptide occupies 19–33 (CVGDDVAALTTRGEA).

Belongs to the MSDIN fungal toxin family. In terms of processing, processed by the macrocyclase-peptidase enzyme POPB to yield a toxic cyclic decapeptide. POPB first removes 10 residues from the N-terminus. Conformational trapping of the remaining peptide forces the enzyme to release this intermediate rather than proceed to macrocyclization. The enzyme rebinds the remaining peptide in a different conformation and catalyzes macrocyclization of the N-terminal 8 residues.

Toxin belonging to the bicyclic octapeptides amatoxins that acts by binding non-competitively to RNA polymerase II and greatly slowing the elongation of transcripts from target promoters. This is Beta-amanitin proprotein from Amanita rimosa.